The chain runs to 181 residues: ATP-dependent protease subunit HslV (181 aa).

Residue Thr-7 is part of the active site. Positions 166, 169, and 172 each coordinate Na(+).

Belongs to the peptidase T1B family. HslV subfamily. In terms of assembly, a double ring-shaped homohexamer of HslV is capped on each side by a ring-shaped HslU homohexamer. The assembly of the HslU/HslV complex is dependent on binding of ATP.

Its subcellular location is the cytoplasm. It carries out the reaction ATP-dependent cleavage of peptide bonds with broad specificity.. Its activity is regulated as follows. Allosterically activated by HslU binding. Its function is as follows. Protease subunit of a proteasome-like degradation complex believed to be a general protein degrading machinery. This chain is ATP-dependent protease subunit HslV, found in Anaeromyxobacter dehalogenans (strain 2CP-C).